The chain runs to 121 residues: Large ribosomal subunit protein bL19 (121 aa).

The protein belongs to the bacterial ribosomal protein bL19 family.

Its function is as follows. This protein is located at the 30S-50S ribosomal subunit interface and may play a role in the structure and function of the aminoacyl-tRNA binding site. The polypeptide is Large ribosomal subunit protein bL19 (Gloeobacter violaceus (strain ATCC 29082 / PCC 7421)).